Reading from the N-terminus, the 342-residue chain is Ferredoxin--NADP reductase (342 aa).

FAD-binding residues include Cys-17, Asp-36, Gln-44, Tyr-49, Val-89, Phe-124, Asp-289, and Thr-330.

It belongs to the ferredoxin--NADP reductase type 2 family. In terms of assembly, homodimer. The cofactor is FAD.

It carries out the reaction 2 reduced [2Fe-2S]-[ferredoxin] + NADP(+) + H(+) = 2 oxidized [2Fe-2S]-[ferredoxin] + NADPH. This chain is Ferredoxin--NADP reductase, found in Bradyrhizobium diazoefficiens (strain JCM 10833 / BCRC 13528 / IAM 13628 / NBRC 14792 / USDA 110).